The chain runs to 121 residues: Large ribosomal subunit protein bL20 (121 aa).

Belongs to the bacterial ribosomal protein bL20 family.

In terms of biological role, binds directly to 23S ribosomal RNA and is necessary for the in vitro assembly process of the 50S ribosomal subunit. It is not involved in the protein synthesizing functions of that subunit. This is Large ribosomal subunit protein bL20 from Polynucleobacter asymbioticus (strain DSM 18221 / CIP 109841 / QLW-P1DMWA-1) (Polynucleobacter necessarius subsp. asymbioticus).